The following is a 1073-amino-acid chain: DNA-directed RNA polymerase subunit beta (1073 aa).

The protein belongs to the RNA polymerase beta chain family. In plastids the minimal PEP RNA polymerase catalytic core is composed of four subunits: alpha, beta, beta', and beta''. When a (nuclear-encoded) sigma factor is associated with the core the holoenzyme is formed, which can initiate transcription.

The protein resides in the plastid. It is found in the chloroplast. It catalyses the reaction RNA(n) + a ribonucleoside 5'-triphosphate = RNA(n+1) + diphosphate. Its function is as follows. DNA-dependent RNA polymerase catalyzes the transcription of DNA into RNA using the four ribonucleoside triphosphates as substrates. The polypeptide is DNA-directed RNA polymerase subunit beta (Aethionema cordifolium (Lebanon stonecress)).